The following is a 373-amino-acid chain: Ferroptosis suppressor protein 1 (373 aa).

Glycine 2 carries N-myristoyl glycine lipidation. Residues 13–29 (VVVVGGGFGGTAAASLL) form a helical membrane-spanning segment. 6-hydroxy-FAD is bound by residues 17–21 (GGGFG), arginine 53, and valine 81. At lysine 167 the chain carries N6-acetyllysine. Position 284 (aspartate 284) interacts with 6-hydroxy-FAD.

This sequence belongs to the FAD-dependent oxidoreductase family. The cofactor is 6-hydroxy-FAD. In terms of processing, N-myristoylation at Gly-2 mediates the recruitment to lipid droplets and plasma membrane. Acetylation at Lys-167 prevents AIFM2 ubiquitination and degradation, thereby inhibiting ferroptosis. KAT2B mediates acetylation at Lys-167, while HDAC3 removes it. Post-translationally, ubiquitinated. AIFM2 undergoes 'Lys-29'-ubiquitination and proteasomal degradation, which is inhibited by acetylation at Lys-167.

Its subcellular location is the lipid droplet. The protein resides in the cell membrane. It localises to the cytoplasm. The protein localises to the mitochondrion membrane. It is found in the nucleus. It carries out the reaction ubiquinone-10 + NADH + H(+) = ubiquinol-10 + NAD(+). The catalysed reaction is phylloquinone + NADH + H(+) = phylloquinol + NAD(+). It catalyses the reaction menaquinone-4 + NADH + H(+) = menaquinol-4 + NAD(+). The enzyme catalyses menadione + NADH + H(+) = menadiol + NAD(+). With respect to regulation, the modification by 4-hydroxy-2-nonenal (HNE) adduction in mitochondria results in loss of the oxidoreductase activity and activation of a novel function in mitochondrial oxidative stress signaling. In terms of biological role, a NAD(P)H-dependent oxidoreductase that acts as a key inhibitor of ferroptosis. At the plasma membrane, catalyzes reduction of coenzyme Q/ubiquinone-10 to ubiquinol-10, a lipophilic radical-trapping antioxidant that prevents lipid oxidative damage and consequently ferroptosis. Acts in parallel to GPX4 to suppress phospholipid peroxidation and ferroptosis. This anti-ferroptotic function is independent of cellular glutathione levels. Also acts as a potent radical-trapping antioxidant by mediating warfarin-resistant vitamin K reduction in the canonical vitamin K cycle: catalyzes NAD(P)H-dependent reduction of vitamin K (phylloquinone, menaquinone-4 and menadione) to hydroquinone forms. Hydroquinones act as potent radical-trapping antioxidants inhibitor of phospholipid peroxidation and ferroptosis. May play a role in mitochondrial stress signaling. Upon oxidative stress, associates with the lipid peroxidation end product 4-hydroxy-2-nonenal (HNE) forming a lipid adduct devoid of oxidoreductase activity, which then translocates from mitochondria into the nucleus triggering DNA damage and cell death. The protein is Ferroptosis suppressor protein 1 (AIFM2) of Taeniopygia guttata (Zebra finch).